The chain runs to 136 residues: Large ribosomal subunit protein uL16 (136 aa).

The protein belongs to the universal ribosomal protein uL16 family. As to quaternary structure, part of the 50S ribosomal subunit.

Its function is as follows. Binds 23S rRNA and is also seen to make contacts with the A and possibly P site tRNAs. The protein is Large ribosomal subunit protein uL16 of Photobacterium profundum (strain SS9).